Here is a 277-residue protein sequence, read N- to C-terminus: Carbonyl reductase [NADPH] 3 (277 aa).

Serine 2 carries the N-acetylserine modification. Residues valine 10–valine 34, arginine 38–arginine 42, aspartate 63–isoleucine 64, and asparagine 90 contribute to the NADP(+) site. Serine 30 is subject to Phosphoserine. Serine 140 contacts substrate. The Proton acceptor role is filled by tyrosine 194. NADP(+) is bound by residues tyrosine 194–lysine 198 and aspartate 239.

Belongs to the short-chain dehydrogenases/reductases (SDR) family. In terms of tissue distribution, detected in ovary, pancreas, intestine, colon, kidney, brain, thymus, lung, heart, liver, spleen, leukocyte, prostate and testis.

The protein resides in the cytoplasm. It carries out the reaction a secondary alcohol + NADP(+) = a ketone + NADPH + H(+). The catalysed reaction is a quinone + NADPH + H(+) = a quinol + NADP(+). In terms of biological role, catalyzes the NADPH-dependent reduction of carbonyl compounds to their corresponding alcohols. Has low NADPH-dependent oxidoreductase activity. Acts on several orthoquinones, acts as well on non-quinone compounds, such as isatin or on the anticancer drug oracin. Best substrates for CBR3 is 1,2- naphthoquinone, hence could play a role in protection against cytotoxicity of exogenous quinones. Exerts activity toward ortho-quinones but not paraquinones. No endogenous substrate for CBR3 except isatin has been identified. This Homo sapiens (Human) protein is Carbonyl reductase [NADPH] 3.